The chain runs to 373 residues: P2Y purinoceptor 1 (373 aa).

Over 1–51 (MTEVPWSAVPNGTDAAFLAGLGSLWGNSTIASTAAVSSSFRCALIKTGFQF) the chain is Extracellular. 2 N-linked (GlcNAc...) asparagine glycosylation sites follow: Asn-11 and Asn-27. 2 disulfides stabilise this stretch: Cys-42-Cys-296 and Cys-124-Cys-202. An ADP-binding site is contributed by Lys-46. A helical transmembrane segment spans residues 52 to 74 (YYLPAVYILVFIIGFLGNSVAIW). Residues 75 to 87 (MFVFHMKPWSGIS) lie on the Cytoplasmic side of the membrane. A helical transmembrane segment spans residues 88–109 (VYMFNLALADFLYVLTLPALIF). Over 110–125 (YYFNKTDWIFGDVMCK) the chain is Extracellular. N-linked (GlcNAc...) asparagine glycosylation occurs at Asn-113. A helical membrane pass occupies residues 126–147 (LQRFIFHVNLYGSILFLTCISA). The Cytoplasmic portion of the chain corresponds to 148–166 (HRYSGVVYPLKSLGRLKKK). A helical membrane pass occupies residues 167–188 (NAIYVSVLVWLIVVVAISPILF). Over 189–214 (YSGTGIRKNKTVTCYDSTSDEYLRSY) the chain is Extracellular. N-linked (GlcNAc...) asparagine glycosylation occurs at Asn-197. 203–205 (YDS) serves as a coordination point for ADP. Residues 215-237 (FIYSMCTTVAMFCIPLVLILGCY) form a helical membrane-spanning segment. At 238 to 260 (GLIVRALIYKDLDNSPLRRKSIY) the chain is on the cytoplasmic side. A helical membrane pass occupies residues 261–284 (LVIIVLTVFAVSYIPFHVMKTMNL). ADP-binding positions include 283 to 287 (NLRAR), 303 to 306 (YATY), and Arg-310. Over 285–303 (RARLDFQTPEMCDFNDRVY) the chain is Extracellular. The helical transmembrane segment at 304–325 (ATYQVTRGLASLNSCVDPILYF) threads the bilayer. At 326–373 (LAGDTFRRRLSRATRKASRRSEANLQSKSEEMTLNILSEFKQNGDTSL) the chain is on the cytoplasmic side.

Belongs to the G-protein coupled receptor 1 family. Expressed in muscle, heart, liver, kidney, lung, brain, spleen, but not in testis.

The protein resides in the cell membrane. Functionally, receptor for extracellular adenine nucleotides such as ADP. In platelets, binding to ADP leads to mobilization of intracellular calcium ions via activation of phospholipase C, a change in platelet shape, and ultimately platelet aggregation. This is P2Y purinoceptor 1 (P2ry1) from Rattus norvegicus (Rat).